A 95-amino-acid chain; its full sequence is 6 kDa early secretory antigenic target (95 aa).

2 helical membrane-spanning segments follow: residues 11-43 (IEAA…AAAW) and 49-85 (EAYQ…AMAS). Residues 56 to 87 (QKWDATATELNNALQNLARTISEAGQAMASTE) are a coiled coil.

This sequence belongs to the WXG100 family. ESAT-6 subfamily. As to quaternary structure, forms a tight 1:1 complex with EsxB (CFP-10).

The protein localises to the secreted. The protein resides in the host membrane. In terms of biological role, a secreted protein. Acts as a strong host T-cell antigen. Plays a number of roles in modulating the host's immune response to infection as well as being responsible for bacterial escape into the host cytoplasm. The protein is 6 kDa early secretory antigenic target (esxA) of Mycobacterium bovis (strain ATCC BAA-935 / AF2122/97).